Consider the following 207-residue polypeptide: Large ribosomal subunit protein bL25 (207 aa).

It belongs to the bacterial ribosomal protein bL25 family. CTC subfamily. In terms of assembly, part of the 50S ribosomal subunit; part of the 5S rRNA/L5/L18/L25 subcomplex. Contacts the 5S rRNA. Binds to the 5S rRNA independently of L5 and L18.

This is one of the proteins that binds to the 5S RNA in the ribosome where it forms part of the central protuberance. This chain is Large ribosomal subunit protein bL25, found in Brucella abortus (strain S19).